Consider the following 249-residue polypeptide: NAD(P)H-quinone oxidoreductase subunit T, chloroplastic (249 aa).

A chloroplast-targeting transit peptide spans 1-45; that stretch reads MAYATSTYARTSCIILPKIQNGAHFTDDTKAFRRITARRVTRIYA. Residues 44–84 form a disordered region; the sequence is YASQGPTKPSKPSPGVDTRIHWESPDEGWIGGRSDPAKSVD. The 67-residue stretch at 106-172 folds into the J domain; sequence SHYQFLGVST…ETRRFYDWTL (67 aa). Residues 224–244 traverse the membrane as a helical segment; it reads LTFDILIVLFAVCCIAFVIVF.

As to quaternary structure, part of the chloroplast NDH complex, composed of a mixture of chloroplast and nucleus encoded subunits. Component of the electron donor-binding subcomplex, at least composed of NDHS, NDHT and NDHU.

The protein localises to the plastid. It is found in the chloroplast thylakoid membrane. The enzyme catalyses a plastoquinone + NADH + (n+1) H(+)(in) = a plastoquinol + NAD(+) + n H(+)(out). The catalysed reaction is a plastoquinone + NADPH + (n+1) H(+)(in) = a plastoquinol + NADP(+) + n H(+)(out). Functionally, NDH shuttles electrons from NAD(P)H:plastoquinone, via FMN and iron-sulfur (Fe-S) centers, to quinones in the photosynthetic chain and possibly in a chloroplast respiratory chain. The immediate electron acceptor for the enzyme in this species is believed to be plastoquinone. Couples the redox reaction to proton translocation, and thus conserves the redox energy in a proton gradient. Required for the accumulation of both the NDH subcomplex A and NDHS. This chain is NAD(P)H-quinone oxidoreductase subunit T, chloroplastic, found in Arabidopsis thaliana (Mouse-ear cress).